Reading from the N-terminus, the 430-residue chain is Putative membrane fusion protein SilB (430 aa).

Positions 1-28 (MASLKIKYAAIIISSLIAGGLISVTAWQ) are cleaved as a signal peptide. Positions 407-430 (RHPEKTENSMPAMSEQPVNMHSGH) are disordered. Positions 414 to 430 (NSMPAMSEQPVNMHSGH) are enriched in polar residues.

Belongs to the membrane fusion protein (MFP) (TC 8.A.1) family.

Its function is as follows. Component of the sil cation efflux system that confers resistance to silver. May be part of a three-component cation/proton antiporter. This chain is Putative membrane fusion protein SilB (silB), found in Salmonella typhimurium.